A 32-amino-acid chain; its full sequence is Calcitonin (32 aa).

C1 and C7 are oxidised to a cystine. P32 is subject to Proline amide.

It belongs to the calcitonin family.

It is found in the secreted. Causes a rapid but short-lived drop in the level of calcium and phosphate in blood by promoting the incorporation of those ions in the bones. This Aquarana catesbeiana (American bullfrog) protein is Calcitonin.